Here is a 432-residue protein sequence, read N- to C-terminus: Enolase (432 aa).

A (2R)-2-phosphoglycerate-binding site is contributed by Gln-163. The active-site Proton donor is Glu-205. Mg(2+)-binding residues include Asp-242, Glu-285, and Asp-312. 4 residues coordinate (2R)-2-phosphoglycerate: Lys-337, Arg-366, Ser-367, and Lys-388. Catalysis depends on Lys-337, which acts as the Proton acceptor.

This sequence belongs to the enolase family. Mg(2+) is required as a cofactor.

The protein localises to the cytoplasm. The protein resides in the secreted. It localises to the cell surface. The catalysed reaction is (2R)-2-phosphoglycerate = phosphoenolpyruvate + H2O. Its pathway is carbohydrate degradation; glycolysis; pyruvate from D-glyceraldehyde 3-phosphate: step 4/5. Catalyzes the reversible conversion of 2-phosphoglycerate (2-PG) into phosphoenolpyruvate (PEP). It is essential for the degradation of carbohydrates via glycolysis. This chain is Enolase, found in Bifidobacterium longum subsp. infantis (strain ATCC 15697 / DSM 20088 / JCM 1222 / NCTC 11817 / S12).